Reading from the N-terminus, the 144-residue chain is Large ribosomal subunit protein uL15 (144 aa).

The segment at 1 to 58 (MRLNTLAPAAGSKHAPKRVGRGIGSGLGKTGGRGHKGQKSRSGGKVRPGFEGGQMPLK) is disordered. The span at 21 to 31 (RGIGSGLGKTG) shows a compositional bias: gly residues. Positions 32-44 (GRGHKGQKSRSGG) are enriched in basic residues.

It belongs to the universal ribosomal protein uL15 family. As to quaternary structure, part of the 50S ribosomal subunit.

In terms of biological role, binds to the 23S rRNA. In Vibrio parahaemolyticus serotype O3:K6 (strain RIMD 2210633), this protein is Large ribosomal subunit protein uL15.